Reading from the N-terminus, the 349-residue chain is MKDNNIIELKGITKSYGKDTILDNLSLNIKKNEFLTLLGPSGCGKTTTLKIIAGFETADSGQVVFENNIINDIPPYERQLNTVFQKYALFPHMNVYENIAFGLKLKKIPKDIIDQKVKEMLKLVALEGYENRDIEALSGGQQQRVAIARALVNEPKVLLLDEPLGALDMKLRKEMQIELKKIQQKLGITFIFVTHDQEEALTMSDTIVVMNKGEIQQMGSPEDIYNEPANSFVAKFIGESNIVDGIMLDDFKVEFGGKIFDCVDKGFEKNEAIEVVIRPEDFEMVKYENGMLKGTVTSIIFKGVHYEIEVKNENHTWILHNTKHAEIGSKIGLSLDPESIHIMKKESDV.

The ABC transporter domain maps to 7–237 (IELKGITKSY…PANSFVAKFI (231 aa)). 39-46 (GPSGCGKT) provides a ligand contact to ATP.

This sequence belongs to the ABC transporter superfamily. Spermidine/putrescine importer (TC 3.A.1.11.1) family. The complex is composed of two ATP-binding proteins (PotA), two transmembrane proteins (PotB and PotC) and a solute-binding protein (PotD).

Its subcellular location is the cell membrane. The enzyme catalyses ATP + H2O + polyamine-[polyamine-binding protein]Side 1 = ADP + phosphate + polyamineSide 2 + [polyamine-binding protein]Side 1.. Functionally, part of the ABC transporter complex PotABCD involved in spermidine/putrescine import. Responsible for energy coupling to the transport system. In Clostridium perfringens (strain SM101 / Type A), this protein is Spermidine/putrescine import ATP-binding protein PotA.